We begin with the raw amino-acid sequence, 493 residues long: uncharacterized protein (493 aa).

An FAD-binding site is contributed by 8–37; it reads DFLVVGGGTCGCVVAARLSEDPSATVMLLE. Catalysis depends on His-429, which acts as the Proton acceptor.

This sequence belongs to the GMC oxidoreductase family. The cofactor is FAD.

This is an uncharacterized protein from Rhodococcus erythropolis (Arthrobacter picolinophilus).